The chain runs to 290 residues: 33 kDa chaperonin (290 aa).

Cystine bridges form between Cys236/Cys238 and Cys269/Cys272.

It belongs to the HSP33 family. Post-translationally, under oxidizing conditions two disulfide bonds are formed involving the reactive cysteines. Under reducing conditions zinc is bound to the reactive cysteines and the protein is inactive.

Its subcellular location is the cytoplasm. In terms of biological role, redox regulated molecular chaperone. Protects both thermally unfolding and oxidatively damaged proteins from irreversible aggregation. Plays an important role in the bacterial defense system toward oxidative stress. The polypeptide is 33 kDa chaperonin (Brevibacillus brevis (strain 47 / JCM 6285 / NBRC 100599)).